We begin with the raw amino-acid sequence, 152 residues long: UPF0178 protein swp_1285 (152 aa).

It belongs to the UPF0178 family.

The polypeptide is UPF0178 protein swp_1285 (Shewanella piezotolerans (strain WP3 / JCM 13877)).